A 535-amino-acid polypeptide reads, in one-letter code: Beta-amylase (535 aa).

Residues 1-2 (ME) constitute a propeptide, removed in mature form. Val3 carries the post-translational modification N-acetylvaline. Positions 51, 91, and 99 each coordinate substrate. Catalysis depends on Glu184, which acts as the Proton donor. Lys293, His298, and Thr340 together coordinate substrate. Glu378 serves as the catalytic Proton acceptor. Substrate-binding positions include 379 to 380 (NA) and Arg418. 3 tandem repeats follow at residues 489–499 (GPTGGMGGQAE), 500–510 (GPTCGMGGQVK), and 511–521 (GPTGGMGGQAE). The tract at residues 489 to 532 (GPTGGMGGQAEGPTCGMGGQVKGPTGGMGGQAEDPTSGMGGELP) is 4 X 11 AA tandem repeats. The propeptide at 490–535 (PTGGMGGQAEGPTCGMGGQVKGPTGGMGGQAEDPTSGMGGELPATM) is removed in mature form. A disordered region spans residues 513–535 (TGGMGGQAEDPTSGMGGELPATM). The stretch at 522 to 532 (DPTSGMGGELP) is one 4; approximate repeat.

The protein belongs to the glycosyl hydrolase 14 family. Monomer. In terms of tissue distribution, endosperm.

It catalyses the reaction Hydrolysis of (1-&gt;4)-alpha-D-glucosidic linkages in polysaccharides so as to remove successive maltose units from the non-reducing ends of the chains.. In terms of biological role, catalyzes the liberation of maltose from 1,4-alpha-D glucans. The protein is Beta-amylase of Hordeum vulgare subsp. spontaneum (Wild barley).